The chain runs to 153 residues: Large ribosomal subunit protein uL13 (153 aa).

Positions 128–153 (SEHPHEAQSPEVLDVTSMNSKNTRSA) are disordered. The span at 143–153 (TSMNSKNTRSA) shows a compositional bias: polar residues.

The protein belongs to the universal ribosomal protein uL13 family. Part of the 50S ribosomal subunit.

Functionally, this protein is one of the early assembly proteins of the 50S ribosomal subunit, although it is not seen to bind rRNA by itself. It is important during the early stages of 50S assembly. The protein is Large ribosomal subunit protein uL13 of Roseobacter denitrificans (strain ATCC 33942 / OCh 114) (Erythrobacter sp. (strain OCh 114)).